We begin with the raw amino-acid sequence, 360 residues long: Peptide chain release factor 1 (360 aa).

N5-methylglutamine is present on Q235. The span at 283–293 shows a compositional bias: basic and acidic residues; it reads EREAQAKEASA. Positions 283-305 are disordered; the sequence is EREAQAKEASARKSLIGSGDRSD.

This sequence belongs to the prokaryotic/mitochondrial release factor family. Post-translationally, methylated by PrmC. Methylation increases the termination efficiency of RF1.

The protein resides in the cytoplasm. In terms of biological role, peptide chain release factor 1 directs the termination of translation in response to the peptide chain termination codons UAG and UAA. This chain is Peptide chain release factor 1, found in Ralstonia pickettii (strain 12J).